The sequence spans 376 residues: E3 ubiquitin-protein ligase RNF133 (376 aa).

The PA domain occupies 65 to 167; it reads SSTLKRVAGV…LKGTEIFHLI (103 aa). A helical membrane pass occupies residues 190 to 210; the sequence is YLVSFVIVTTATLAYFIFYHI. Residues 256 to 297 form an RING-type; atypical zinc finger; it reads CVICFERYKPNDIVRILTCKHFFHKNCIDPWILPHGTCPICK. The segment at 327 to 376 is disordered; sequence ETLSPSEEETNNEVSPAGTSDKVIHVEENPTSQNNDIQPHSVVEDVHPSP. Residues 355-364 show a composition bias toward polar residues; it reads NPTSQNNDIQ.

As to quaternary structure, interacts with E3 ligase UBE2J1. Auto-ubiquitinated. In terms of tissue distribution, expression is testis-specific.

Its subcellular location is the endoplasmic reticulum membrane. It catalyses the reaction S-ubiquitinyl-[E2 ubiquitin-conjugating enzyme]-L-cysteine + [acceptor protein]-L-lysine = [E2 ubiquitin-conjugating enzyme]-L-cysteine + N(6)-ubiquitinyl-[acceptor protein]-L-lysine.. Its pathway is protein modification; protein ubiquitination. In terms of biological role, has E3 ubiquitin-protein ligase activity. Plays a role in male fecundity through the interaction with the E2 ubituitin-protein ligase UBE2J1. In Homo sapiens (Human), this protein is E3 ubiquitin-protein ligase RNF133.